A 97-amino-acid chain; its full sequence is NADH-quinone oxidoreductase subunit K (97 aa).

The next 3 membrane-spanning stretches (helical) occupy residues Met1–Tyr21, Ile25–Tyr45, and Val57–Leu77.

The protein belongs to the complex I subunit 4L family. NDH-1 is composed of 14 different subunits. Subunits NuoA, H, J, K, L, M, N constitute the membrane sector of the complex.

The protein localises to the cell inner membrane. The enzyme catalyses a quinone + NADH + 5 H(+)(in) = a quinol + NAD(+) + 4 H(+)(out). NDH-1 shuttles electrons from NADH, via FMN and iron-sulfur (Fe-S) centers, to quinones in the respiratory chain. The immediate electron acceptor for the enzyme in this species is believed to be a menaquinone. Couples the redox reaction to proton translocation (for every two electrons transferred, four hydrogen ions are translocated across the cytoplasmic membrane), and thus conserves the redox energy in a proton gradient. The protein is NADH-quinone oxidoreductase subunit K of Cytophaga hutchinsonii (strain ATCC 33406 / DSM 1761 / CIP 103989 / NBRC 15051 / NCIMB 9469 / D465).